The chain runs to 190 residues: Holliday junction branch migration complex subunit RuvA (190 aa).

Residues 1–64 (MIGRISGQLA…EDAQILYGFG (64 aa)) are domain I. The tract at residues 65–137 (SATERAAFRQ…LKGKLGADIG (73 aa)) is domain II. The interval 137–141 (GVQVS) is flexible linker. The interval 142–190 (VSSDSQSDILQALVALGYSDRDAALALKALPKDIGVSDGIKLALKALAK) is domain III.

This sequence belongs to the RuvA family. In terms of assembly, homotetramer. Forms an RuvA(8)-RuvB(12)-Holliday junction (HJ) complex. HJ DNA is sandwiched between 2 RuvA tetramers; dsDNA enters through RuvA and exits via RuvB. An RuvB hexamer assembles on each DNA strand where it exits the tetramer. Each RuvB hexamer is contacted by two RuvA subunits (via domain III) on 2 adjacent RuvB subunits; this complex drives branch migration. In the full resolvosome a probable DNA-RuvA(4)-RuvB(12)-RuvC(2) complex forms which resolves the HJ.

The protein resides in the cytoplasm. Functionally, the RuvA-RuvB-RuvC complex processes Holliday junction (HJ) DNA during genetic recombination and DNA repair, while the RuvA-RuvB complex plays an important role in the rescue of blocked DNA replication forks via replication fork reversal (RFR). RuvA specifically binds to HJ cruciform DNA, conferring on it an open structure. The RuvB hexamer acts as an ATP-dependent pump, pulling dsDNA into and through the RuvAB complex. HJ branch migration allows RuvC to scan DNA until it finds its consensus sequence, where it cleaves and resolves the cruciform DNA. This Polaromonas sp. (strain JS666 / ATCC BAA-500) protein is Holliday junction branch migration complex subunit RuvA.